Here is a 154-residue protein sequence, read N- to C-terminus: Myoglobin (154 aa).

The 147-residue stretch at 2–148 (GLSDGEWQLV…FRKDIAAKYK (147 aa)) folds into the Globin domain. At Ser-4 the chain carries Phosphoserine. A nitrite-binding site is contributed by His-65. His-65 contributes to the O2 binding site. Residue Thr-68 is modified to Phosphothreonine. His-94 provides a ligand contact to heme b.

This sequence belongs to the globin family. Monomeric.

The protein localises to the cytoplasm. It is found in the sarcoplasm. The enzyme catalyses Fe(III)-heme b-[protein] + nitric oxide + H2O = Fe(II)-heme b-[protein] + nitrite + 2 H(+). It catalyses the reaction H2O2 + AH2 = A + 2 H2O. In terms of biological role, monomeric heme protein which primary function is to store oxygen and facilitate its diffusion within muscle tissues. Reversibly binds oxygen through a pentacoordinated heme iron and enables its timely and efficient release as needed during periods of heightened demand. Depending on the oxidative conditions of tissues and cells, and in addition to its ability to bind oxygen, it also has a nitrite reductase activity whereby it regulates the production of bioactive nitric oxide. Under stress conditions, like hypoxia and anoxia, it also protects cells against reactive oxygen species thanks to its pseudoperoxidase activity. The polypeptide is Myoglobin (MB) (Castor fiber (Eurasian beaver)).